We begin with the raw amino-acid sequence, 374 residues long: MEMREKIAKAQRVVVKIGSALLTNDGQGLDVARIGLWVAQIAELRAQGKEVVLVSSGSIAAGMKRLGFSSRPTQVNELQAAAAVGQMELVGVYESHFEKHGLCTAQILLTHDDLSNRRRYLNARSSLRTLLGFGVVPIINENDTVVTDEIRFGDNDTLGALVANLVEADLLIILTDQQGLFDKNPRDHQDATLISHISASDNRLESMASGGAGVLGSGGMLTKVRAALLAARSGADTLIASGREENVIVRVASGEMMGTWLQPEHGRVAARKQWLAGHLKSRGALILDDGAVKALRKEGTSLLAVGVKDAQGTFSRGDMVVCVDLQGGLVARGLVNYSVAETLKLLGQPSSNIGAILGYKGEPELIHRDDLVII.

Lys-16 contributes to the ATP binding site. Ser-56, Asp-143, and Asn-155 together coordinate substrate. ATP contacts are provided by residues 175–176 (TD) and 217–223 (SGGMLTK). A PUA domain is found at 282 to 360 (RGALILDDGA…SNIGAILGYK (79 aa)).

The protein belongs to the glutamate 5-kinase family.

It localises to the cytoplasm. The catalysed reaction is L-glutamate + ATP = L-glutamyl 5-phosphate + ADP. The protein operates within amino-acid biosynthesis; L-proline biosynthesis; L-glutamate 5-semialdehyde from L-glutamate: step 1/2. Its function is as follows. Catalyzes the transfer of a phosphate group to glutamate to form L-glutamate 5-phosphate. This Marinomonas sp. (strain MWYL1) protein is Glutamate 5-kinase.